Here is a 173-residue protein sequence, read N- to C-terminus: Archaemetzincin (173 aa).

His130 contacts Zn(2+). The Proton acceptor role is filled by Glu131. His134, His140, Cys141, Cys146, Cys165, and Cys168 together coordinate Zn(2+).

Belongs to the peptidase M54 family. Monomer. Zn(2+) serves as cofactor.

Probable zinc metalloprotease whose natural substrate is unknown. This is Archaemetzincin from Halobacterium salinarum (strain ATCC 29341 / DSM 671 / R1).